The following is a 589-amino-acid chain: MKRTTYAGLVDEKYLNQTVTLSGWVQKRRDFGDLIFVDLRDREGIVQLTFNATHAEALAVAENMRNEYVISVTGQVVRREASQINNKIHSGQIEIDVIEAEILATSKTPPFYIEDNVNANEELKLQYRYLDLRRPEMQKNLRIRSKIMSSAMHFMDQNDFINIETPILAKSTPEGARDYLVPSRIFPGSFYALPQSPQLFKQLLMGSGFDRYFQIARAFRDEDLRGDRQPEFTQMDVETSFMSADEIRELVNAWVKAMMSDVVNFDLDTTKIPTLTWQESMDRFGTDKPDLRIAYELKDVSETVKSSEFGVFAKAVEAGGVVKAIAVPGGAENYSRKDIDKMAQYIERFGAKGLAWLKVTDEGISGPIAKFFPNHAALLQVTGAKPGDLLLFGAGRNDIVAATLDYLRRQTAKDLNLIDMTNPWAFAWIVDWPLFEYSEDFDRWIAAHHPFTMPNEEDLHYLDDGEDPHQAHAQSYDLVLNGYELGSGSIRIHRMDIQEKMLKALGFTPEAAHEAFGFLLEGMTFGFPPMGGIALGLDRLAMLLAGQENIREVIAFPKNSRATEPMTQAPTRVDHKQVNDLGLFVSDVE.

Glu174 contributes to the L-aspartate binding site. Residues 198–201 (QLFK) form an aspartate region. Arg220 provides a ligand contact to L-aspartate. ATP is bound by residues 220 to 222 (RDE) and Gln229. His448 is a binding site for L-aspartate. An ATP-binding site is contributed by Glu484. Residue Arg491 coordinates L-aspartate. An ATP-binding site is contributed by 536–539 (GLDR).

Belongs to the class-II aminoacyl-tRNA synthetase family. Type 1 subfamily. In terms of assembly, homodimer.

The protein resides in the cytoplasm. The catalysed reaction is tRNA(Asp) + L-aspartate + ATP = L-aspartyl-tRNA(Asp) + AMP + diphosphate. Catalyzes the attachment of L-aspartate to tRNA(Asp) in a two-step reaction: L-aspartate is first activated by ATP to form Asp-AMP and then transferred to the acceptor end of tRNA(Asp). The chain is Aspartate--tRNA ligase from Leuconostoc citreum (strain KM20).